The sequence spans 251 residues: Proteasome subunit alpha type-4-like (251 aa).

Belongs to the peptidase T1A family. As to quaternary structure, the 26S proteasome consists of a 20S proteasome core and two 19S regulatory subunits. The 20S proteasome core is composed of 28 subunits that are arranged in four stacked rings, resulting in a barrel-shaped structure. The two end rings are each formed by seven alpha subunits, and the two central rings are each formed by seven beta subunits. The catalytic chamber with the active sites is on the inside of the barrel. As to expression, testis, prominent after meiosis II. After meiosis, predominantly localized to the haploid spermatid nuclei of the 64-cell cysts, remaining during the elongation and condensation of the spermatid nuclei. In mature, motile sperm, expression is seen exclusively in the sperm head.

It is found in the nucleus. Functionally, the proteasome is a multicatalytic proteinase complex which is characterized by its ability to cleave peptides with Arg, Phe, Tyr, Leu, and Glu adjacent to the leaving group at neutral or slightly basic pH. The proteasome has an ATP-dependent proteolytic activity. This is Proteasome subunit alpha type-4-like (Prosalpha3T) from Drosophila melanogaster (Fruit fly).